The primary structure comprises 1829 residues: Protein let-418 (1829 aa).

Acidic residues-rich tracts occupy residues 1–17 (MSTEEDPSLVDAEESME) and 25–39 (ATEETEEEEEQEQGD). 2 disordered regions span residues 1–81 (MSTE…YNST) and 147–198 (MAAQ…SDQE). Residues 48-63 (RSSRKKGGKGGKKGSK) are compositionally biased toward basic residues. 2 consecutive PHD-type zinc fingers follow at residues 256–303 (NDYC…CIEH) and 317–365 (DEFC…CETV). 2 Chromo domains span residues 401–458 (LKPP…PPEF) and 489–550 (MQIH…NEDI). Residues 614–798 (RHCWSNGTDA…FHLLNFLSKE (185 aa)) enclose the Helicase ATP-binding domain. Residue 627-634 (DEMGLGKT) coordinates ATP. The DEAH box motif lies at 749-752 (DEAH). One can recognise a Helicase C-terminal domain in the interval 930 to 1093 (LLQKMLRKLK…GKTMSKTELD (164 aa)). Disordered regions lie at residues 1168-1198 (ASYQTKETEGQEEEEEEETEVIKEDEKEPDP), 1234-1289 (SENM…MPPL), 1415-1495 (AANG…ARPS), and 1745-1829 (NGER…PMET). The segment covering 1177-1186 (GQEEEEEEET) has biased composition (acidic residues). Polar residues-rich tracts occupy residues 1234 to 1247 (SENMGTDWSKQNQT) and 1418 to 1427 (GSAQGSSRST). Basic and acidic residues predominate over residues 1429–1444 (KPKEEPKEEPMEKEDA). Residues 1446-1455 (ETVNGATSEP) show a composition bias toward polar residues. Positions 1474 to 1490 (DEAKEPKEEPIETEKPR) are enriched in basic and acidic residues. Positions 1749-1773 (MEEDEPVEAEEEEGVKQEPDDETQD) are enriched in acidic residues. The segment covering 1792–1811 (DVPSTSAAAAVSSETAADAE) has biased composition (low complexity). Over residues 1819–1829 (APTDEPEPMET) the composition is skewed to acidic residues.

In terms of assembly, component of the MEC (MEP-1-containing complex) complex that contains let-418, mep-1 and hda-1. Component of a NURD complex that contains let-418, hda-1, lin-40 and lin-53. Interacts with lin-1. Interacts with pie-1. Interacts with akir-1. Expressed in embryos and larva.

The protein localises to the nucleus. Its function is as follows. Part of a NuRD (Nucleosome Remodeling and Deacetylase) complex which is implicated in the synMuv B pathway that negatively regulates specification of vulval cell fate. This negative regulation is thought to be mediated via interaction with the promoter of lin-39, a key regulator in vulva development, and is dependent on the presence lin-1. Contributes to negative regulation of lag-2 which is expressed in the gut during larval development. Has a broad role in development. In association with akir-1, plays a role in regulating the transcription of antimicrobial peptide genes in response to fungal infection. The polypeptide is Protein let-418 (Caenorhabditis elegans).